Consider the following 467-residue polypeptide: Immunoglobulin superfamily member 21 (467 aa).

The N-terminal stretch at 1-24 is a signal peptide; the sequence is MRTAPSLRRCVCLLLAAILDLARG. Residues 25-132 form the Ig-like 1 domain; that stretch reads YLTVNIEPLP…RATREKVVLA (108 aa). A disulfide bridge links C46 with C116. N-linked (GlcNAc...) asparagine glycans are attached at residues N82 and N165. Residues 229–259 are disordered; it reads LSLLDAENRGGRPYTERPSRGLTPDPNILLQ. A compositionally biased stretch (basic and acidic residues) spans 234-247; sequence AENRGGRPYTERPS. In terms of domain architecture, Ig-like 2 spans 344–429; it reads PKIVMTPSRA…GSTDTHTRLI (86 aa). 2 N-linked (GlcNAc...) asparagine glycosylation sites follow: N407 and N444.

In terms of assembly, interacts (Ig-like 1 domain) with NRXN2 (via Laminin G-like 1 domain) in a trans-interaction manner.

It localises to the postsynaptic cell membrane. Functionally, involved in synaptic inhibition in the brain. Selectively regulates inhibitory presynaptic differentiation through interacting with presynaptic NRXN2. The chain is Immunoglobulin superfamily member 21 from Homo sapiens (Human).